Reading from the N-terminus, the 233-residue chain is Homeobox protein Hox-D4a (233 aa).

The Antp-type hexapeptide signature appears at 124–129 (VYPWMK). The homeobox DNA-binding region spans 145–204 (PKRSRTAYTRQQVLELEKEFHFNRYLTRRRRIEIAHTLCLSERQIKIWFQNRRMKWTKDH). Residues 203-233 (DHKLPNTKGRSAPASSHLQSIHKDQTDITSL) form a disordered region. Residues 223–233 (IHKDQTDITSL) show a composition bias toward basic and acidic residues.

It belongs to the Antp homeobox family. Deformed subfamily.

The protein resides in the nucleus. In terms of biological role, sequence-specific transcription factor which is part of a developmental regulatory system that provides cells with specific positional identities on the anterior-posterior axis. The sequence is that of Homeobox protein Hox-D4a (hoxd4a) from Takifugu rubripes (Japanese pufferfish).